A 500-amino-acid chain; its full sequence is MSDLKTEAQDLQQEENALIALRKEKLAAERVKGNAFPNDFRRDSYCNDLQKQYADKTKEELEAAAIPVKVAGRIMLNRGSFMVIQDMTGRIQVYVNRKTLSEDTLAAVKTWDLGDIISAEGTLARSGKGDLYVEMTNVRLLTKSLRPLPDKHHGLTDTEQRYRQRYVDLMVNEETRHTFRVRSQVISHIRKFLIERDFLEVETPMLQTIPGGAAAKPFETHHNALDMAMFLRIAPELYLKRLVVGGFEKVFEINRNFRNEGVSTRHNPEFTMLEFYQAYADYRDNMDLTEELFRELAQLVLGSTDVPYGDKVFHFGEPFVRLSVFDSILKYNPELTAADLQDVDRAREIAKKAGAKVLGHEGLGKLQVMIFEELVEHKLEQPHFITEYPFEVSPLARRNDDNPAVTDRFELFIGGREIANAYSELNDAEDQAERFLAQVAEKDAGDDEAMHYDADFVRALEYGMPPTAGEGIGIDRLVMLLTNSPSIRDVILFPHMRPQA.

Mg(2+) is bound by residues glutamate 410 and glutamate 417.

This sequence belongs to the class-II aminoacyl-tRNA synthetase family. In terms of assembly, homodimer. The cofactor is Mg(2+).

The protein localises to the cytoplasm. It carries out the reaction tRNA(Lys) + L-lysine + ATP = L-lysyl-tRNA(Lys) + AMP + diphosphate. This chain is Lysine--tRNA ligase, found in Pseudomonas entomophila (strain L48).